The primary structure comprises 126 residues: Large ribosomal subunit protein bL12 (126 aa).

It belongs to the bacterial ribosomal protein bL12 family. In terms of assembly, homodimer. Part of the ribosomal stalk of the 50S ribosomal subunit. Forms a multimeric L10(L12)X complex, where L10 forms an elongated spine to which 2 to 4 L12 dimers bind in a sequential fashion. Binds GTP-bound translation factors.

Functionally, forms part of the ribosomal stalk which helps the ribosome interact with GTP-bound translation factors. Is thus essential for accurate translation. This is Large ribosomal subunit protein bL12 from Acidovorax ebreus (strain TPSY) (Diaphorobacter sp. (strain TPSY)).